Here is a 139-residue protein sequence, read N- to C-terminus: MLMPKRVKYRKSQRGRMKGNSGRGTSVSFGSFGLKAMEPAWITSRQIEAARVAMNRYMKRDGKIWIRIFPDKPVSKKAAETRMGSGKGSPEFWVAVVKPGRIMFEAEGVSREVATEAFRLAAQKLPIKTKFIVRPDYEG.

Over residues 1–17 the composition is skewed to basic residues; the sequence is MLMPKRVKYRKSQRGRM. The disordered stretch occupies residues 1 to 24; that stretch reads MLMPKRVKYRKSQRGRMKGNSGRG.

This sequence belongs to the universal ribosomal protein uL16 family. As to quaternary structure, part of the 50S ribosomal subunit.

Functionally, binds 23S rRNA and is also seen to make contacts with the A and possibly P site tRNAs. The polypeptide is Large ribosomal subunit protein uL16 (Chlorobium limicola (strain DSM 245 / NBRC 103803 / 6330)).